The following is a 223-amino-acid chain: Uracil-DNA glycosylase (223 aa).

Asp61 serves as the catalytic Proton acceptor.

The protein belongs to the uracil-DNA glycosylase (UDG) superfamily. UNG family.

Its subcellular location is the cytoplasm. It carries out the reaction Hydrolyzes single-stranded DNA or mismatched double-stranded DNA and polynucleotides, releasing free uracil.. In terms of biological role, excises uracil residues from the DNA which can arise as a result of misincorporation of dUMP residues by DNA polymerase or due to deamination of cytosine. The chain is Uracil-DNA glycosylase from Haemophilus ducreyi (strain 35000HP / ATCC 700724).